The following is an 863-amino-acid chain: DNA replication licensing factor mcm4-B (863 aa).

The disordered stretch occupies residues 1-130; it reads MSSPTSTPSR…ARKVKQVDLH (130 aa). 2 stretches are compositionally biased toward polar residues: residues 54–64 and 84–99; these read SPSGDVQSPSG and LDLS…SSRV. The C4-type zinc finger occupies 306–331; that stretch reads CQVCAFTTRVEIDRGRIAEPSVCKHC. Positions 458–667 constitute an MCM domain; that stretch reads IYERLAAALA…YDRRLAHHLV (210 aa). The ATP site is built by Tyr471, Arg497, Lys516, Ser517, Asn618, Arg643, Arg732, and Glu735. The Arginine finger signature appears at 642–645; sequence SRFD.

Belongs to the MCM family. In terms of assembly, component of the mcm2-7 complex (RLF-M). The complex forms a toroidal hexameric ring with the proposed subunit order mcm2-mcm6-mcm4-mcm7-mcm3-mcm5. The heterodimer of mmcm3/mcm5 interacts with mcm4, mmcm6, mcm7 and weakly with mcm2. Begins to associate with zmcm6 at the neurula stage. Component of the CMG helicase complex, composed of the mcm2-7 complex, the GINS complex and cdc45. Post-translationally, hyperphosphorylated during mitosis in a mechanism requiring cdc2-cyclin B and other kinases. Undergoes dephosphorylation after exiting mitosis, existing in a partially phosphorylated state in the cytosolic interphase mcm complex which associates with the pre-replication complexes (pre-Rcs). Complete dephosphorylation inactivates the mcm complex, preventing its binding to chromatin. Becomes actively phosphorylated during S phase once the mcm complex is assembled on the chromatin. This chromatin-associated phosphorylation occurs during the activation of the pre-Rcs and is independent of cdks. Phosphorylated by the cdc7-dbf4b complex.

The protein localises to the nucleus. It localises to the chromosome. The enzyme catalyses ATP + H2O = ADP + phosphate + H(+). Its function is as follows. Acts as a component of the MCM2-7 complex (MCM complex) which is the replicative helicase essential for 'once per cell cycle' DNA replication initiation and elongation in eukaryotic cells. Core component of CDC45-MCM-GINS (CMG) helicase, the molecular machine that unwinds template DNA during replication, and around which the replisome is built. The active ATPase sites in the MCM2-7 ring are formed through the interaction surfaces of two neighboring subunits such that a critical structure of a conserved arginine finger motif is provided in trans relative to the ATP-binding site of the Walker A box of the adjacent subunit. The six ATPase active sites, however, are likely to contribute differentially to the complex helicase activity. The polypeptide is DNA replication licensing factor mcm4-B (mcm4-b) (Xenopus laevis (African clawed frog)).